A 1257-amino-acid polypeptide reads, in one-letter code: Protein flightless-1 homolog (1257 aa).

LRR repeat units lie at residues 6–31 (LQFV…VEQM), 32–54 (TQMT…LSRC), 56–77 (NLEH…LSDL), 78–102 (PRLR…IFRM), 103–126 (KDLT…EYAK), 128–148 (SIVL…VCAN), 149–172 (LIDL…IRRL), 174–195 (MLQS…QLPS), 197–221 (TSLS…LDDM), 222–244 (HNLR…LFKL), 246–267 (NLRK…EGEW), 268–290 (ENLE…VVKL), 292–315 (RLTK…IGKL), 316–338 (IQLT…ISRC), 339–361 (VKLQ…IHLL), and 363–384 (DLKV…PNDA). Gelsolin-like repeat units follow at residues 523–600 (MDEA…EEFL), 640–714 (AVEM…PEFW), 759–832 (ELPK…MMFR), and 1168–1243 (EKTV…CRFR).

The protein belongs to the villin/gelsolin family.

Its function is as follows. May play a key role in embryonic cellularization by interacting with both the cytoskeleton and other cellular components. In Caenorhabditis elegans, this protein is Protein flightless-1 homolog (fli-1).